A 488-amino-acid polypeptide reads, in one-letter code: Probable malate:quinone oxidoreductase (488 aa).

This sequence belongs to the MQO family. FAD serves as cofactor.

It catalyses the reaction (S)-malate + a quinone = a quinol + oxaloacetate. The protein operates within carbohydrate metabolism; tricarboxylic acid cycle; oxaloacetate from (S)-malate (quinone route): step 1/1. This chain is Probable malate:quinone oxidoreductase, found in Neisseria meningitidis serogroup A / serotype 4A (strain DSM 15465 / Z2491).